A 243-amino-acid chain; its full sequence is MASSFSAESAERIIVALDGMAPDQALAFSAQVQGLRWVKVGLELFVQAGPEVVIQLRNQGLRVFLDLKFHDIPTTMAGACLRAAALGAELITVHACAGSEALQAAQAAVVEGAQSTGQPVPTLLAVTVLTSWEEHRLQRELAVEQGIAERVSQLALLAAKAGVGGCVCSPLEVASLRAQHREPFALVTPGIRPQGTSVGDQVRVMTPPAAIEAGASQLVIGRPITQSENPSGAFAQCCTALST.

Residues aspartate 18, lysine 39, 66 to 75 (DLKFHDIPTT), threonine 130, arginine 192, glutamine 201, glycine 221, and arginine 222 each bind substrate. The Proton donor role is filled by lysine 68.

This sequence belongs to the OMP decarboxylase family. Type 1 subfamily. Homodimer.

The enzyme catalyses orotidine 5'-phosphate + H(+) = UMP + CO2. It participates in pyrimidine metabolism; UMP biosynthesis via de novo pathway; UMP from orotate: step 2/2. Catalyzes the decarboxylation of orotidine 5'-monophosphate (OMP) to uridine 5'-monophosphate (UMP). This is Orotidine 5'-phosphate decarboxylase from Synechococcus sp. (strain CC9311).